The chain runs to 78 residues: Pigment-dispersing hormone peptides (78 aa).

The signal sequence occupies residues 1–22; the sequence is MRSAVIVTMLVVVALAALLTQG. Position 75 is an alanine amide (alanine 75).

The protein belongs to the arthropod PDH family. In terms of tissue distribution, expressed in eyestalk tissue and cerebral ganglia.

It is found in the secreted. Its function is as follows. The pigment-dispersing hormone causes the migration of the distal retinal pigment into the proximal end of the pigment chromatophore cells and thus decreases the amount of light entering the retinulas. May also function as a neurotransmitter and/or neuromodulator. In Carcinus maenas (Common shore crab), this protein is Pigment-dispersing hormone peptides.